The primary structure comprises 318 residues: Isoflavone reductase (318 aa).

NADP(+) is bound by residues 11–17, R36, and K44; that span reads GPTGAIG. The active-site Proton acceptor is K144. R148 provides a ligand contact to NADP(+).

This sequence belongs to the NmrA-type oxidoreductase family. Isoflavone reductase subfamily.

It catalyses the reaction (3R)-vestitone + NADP(+) = 2'-hydroxyformononetin + NADPH + 2 H(+). The protein operates within phytoalexin biosynthesis; pterocarpan phytoalexin biosynthesis. In terms of biological role, reduces achiral isoflavones to chiral isoflavanones during the biosynthesis of chiral pterocarpan phytoalexins. The chain is Isoflavone reductase (IFR) from Cicer arietinum (Chickpea).